A 301-amino-acid chain; its full sequence is Protein FAM221A (301 aa).

The tract at residues 235-271 (MHAPSTSSPQPLAGGNEVGPSTQLSSLRKPEEDDMAY) is disordered.

Belongs to the FAM221 family.

The sequence is that of Protein FAM221A (Fam221a) from Mus musculus (Mouse).